A 389-amino-acid polypeptide reads, in one-letter code: S-adenosylmethionine synthase (389 aa).

H17 is a binding site for ATP. Residue D19 coordinates Mg(2+). E45 provides a ligand contact to K(+). 2 residues coordinate L-methionine: E58 and Q101. The flexible loop stretch occupies residues 101–111 (QSPDISQGVDG). ATP contacts are provided by residues 170–172 (DSK), 237–238 (RF), D246, 252–253 (RK), A269, and K273. Residue D246 participates in L-methionine binding. Residue K277 participates in L-methionine binding.

Belongs to the AdoMet synthase family. Homotetramer; dimer of dimers. Mg(2+) serves as cofactor. K(+) is required as a cofactor.

It is found in the cytoplasm. The enzyme catalyses L-methionine + ATP + H2O = S-adenosyl-L-methionine + phosphate + diphosphate. It functions in the pathway amino-acid biosynthesis; S-adenosyl-L-methionine biosynthesis; S-adenosyl-L-methionine from L-methionine: step 1/1. Functionally, catalyzes the formation of S-adenosylmethionine (AdoMet) from methionine and ATP. The overall synthetic reaction is composed of two sequential steps, AdoMet formation and the subsequent tripolyphosphate hydrolysis which occurs prior to release of AdoMet from the enzyme. The polypeptide is S-adenosylmethionine synthase (Treponema denticola (strain ATCC 35405 / DSM 14222 / CIP 103919 / JCM 8153 / KCTC 15104)).